The primary structure comprises 153 residues: 3-hydroxyacyl-[acyl-carrier-protein] dehydratase FabZ (153 aa).

The active site involves His-59.

Belongs to the thioester dehydratase family. FabZ subfamily.

It localises to the cytoplasm. The enzyme catalyses a (3R)-hydroxyacyl-[ACP] = a (2E)-enoyl-[ACP] + H2O. Functionally, involved in unsaturated fatty acids biosynthesis. Catalyzes the dehydration of short chain beta-hydroxyacyl-ACPs and long chain saturated and unsaturated beta-hydroxyacyl-ACPs. The polypeptide is 3-hydroxyacyl-[acyl-carrier-protein] dehydratase FabZ (Thermosynechococcus vestitus (strain NIES-2133 / IAM M-273 / BP-1)).